A 319-amino-acid chain; its full sequence is Ribonuclease Z (319 aa).

Zn(2+) contacts are provided by His62, His64, Asp66, His67, His145, Asp215, and His273. Asp66 serves as the catalytic Proton acceptor.

This sequence belongs to the RNase Z family. Homodimer. Zn(2+) is required as a cofactor.

The catalysed reaction is Endonucleolytic cleavage of RNA, removing extra 3' nucleotides from tRNA precursor, generating 3' termini of tRNAs. A 3'-hydroxy group is left at the tRNA terminus and a 5'-phosphoryl group is left at the trailer molecule.. Zinc phosphodiesterase, which displays some tRNA 3'-processing endonuclease activity. Probably involved in tRNA maturation, by removing a 3'-trailer from precursor tRNA. The polypeptide is Ribonuclease Z (Borrelia hermsii (strain HS1 / DAH)).